The chain runs to 398 residues: uncharacterized protein (398 aa).

Belongs to the class-V pyridoxal-phosphate-dependent aminotransferase family. Homodimer.

Functionally, is essential for optimal growth. This is an uncharacterized protein from Mycobacterium tuberculosis (strain CDC 1551 / Oshkosh).